The primary structure comprises 222 residues: Charged multivesicular body protein 4b (222 aa).

Disordered regions lie at residues Met1–Gln21 and Gly183–Ala222. Residues Gln21–Gln182 adopt a coiled-coil conformation. The segment covering Pro188 to Lys200 has biased composition (low complexity).

It belongs to the SNF7 family. As to quaternary structure, probable core component of the endosomal sorting required for transport complex III (ESCRT-III). ESCRT-III components are thought to multimerize to form a flat lattice on the perimeter membrane of the endosome.

It localises to the cytoplasm. The protein localises to the cytosol. Its subcellular location is the late endosome membrane. The protein resides in the midbody. Probable core component of the endosomal sorting required for transport complex III (ESCRT-III) which is involved in multivesicular bodies (MVBs) formation and sorting of endosomal cargo proteins into MVBs. MVBs contain intraluminal vesicles (ILVs) that are generated by invagination and scission from the limiting membrane of the endosome and mostly are delivered to lysosomes enabling degradation of membrane proteins, such as stimulated growth factor receptors, lysosomal enzymes and lipids. The chain is Charged multivesicular body protein 4b (chmp4b) from Xenopus tropicalis (Western clawed frog).